Here is a 156-residue protein sequence, read N- to C-terminus: Ribosome maturation factor RimP (156 aa).

The protein belongs to the RimP family.

The protein localises to the cytoplasm. Its function is as follows. Required for maturation of 30S ribosomal subunits. The sequence is that of Ribosome maturation factor RimP from Shouchella clausii (strain KSM-K16) (Alkalihalobacillus clausii).